The sequence spans 119 residues: Large ribosomal subunit protein bL20 (119 aa).

Belongs to the bacterial ribosomal protein bL20 family.

Functionally, binds directly to 23S ribosomal RNA and is necessary for the in vitro assembly process of the 50S ribosomal subunit. It is not involved in the protein synthesizing functions of that subunit. The protein is Large ribosomal subunit protein bL20 of Burkholderia ambifaria (strain MC40-6).